A 94-amino-acid chain; its full sequence is Aspartyl/glutamyl-tRNA(Asn/Gln) amidotransferase subunit C (94 aa).

It belongs to the GatC family. In terms of assembly, heterotrimer of A, B and C subunits.

The enzyme catalyses L-glutamyl-tRNA(Gln) + L-glutamine + ATP + H2O = L-glutaminyl-tRNA(Gln) + L-glutamate + ADP + phosphate + H(+). It catalyses the reaction L-aspartyl-tRNA(Asn) + L-glutamine + ATP + H2O = L-asparaginyl-tRNA(Asn) + L-glutamate + ADP + phosphate + 2 H(+). Its function is as follows. Allows the formation of correctly charged Asn-tRNA(Asn) or Gln-tRNA(Gln) through the transamidation of misacylated Asp-tRNA(Asn) or Glu-tRNA(Gln) in organisms which lack either or both of asparaginyl-tRNA or glutaminyl-tRNA synthetases. The reaction takes place in the presence of glutamine and ATP through an activated phospho-Asp-tRNA(Asn) or phospho-Glu-tRNA(Gln). In Caldicellulosiruptor saccharolyticus (strain ATCC 43494 / DSM 8903 / Tp8T 6331), this protein is Aspartyl/glutamyl-tRNA(Asn/Gln) amidotransferase subunit C.